The primary structure comprises 162 residues: Phospholipase A and acyltransferase 3 (162 aa).

The Cytoplasmic portion of the chain corresponds to 1–133; it reads MLAPIPEPKP…VPRSDQVRDA (133 aa). The region spanning 13–129 is the LRAT domain; it reads LIEIFRPMYR…LRYGVPRSDQ (117 aa). Catalysis depends on residues histidine 23 and histidine 35. The active-site Acyl-thioester intermediate is cysteine 113. A helical transmembrane segment spans residues 134–154; it reads VKAVGIAGVGLAALGLVGVML. Over 155-162 the chain is Lumenal; sequence SRNKKQKQ.

Belongs to the H-rev107 family. Interacts with PPP2R1A; this interaction might decrease PP2A activity. As to expression, ubiquitously expressed in normal tissues but down-regulated in primary carcinomas or in many cell lines derived from tumors. Highly expressed in white adipose tissue and in adipocytes. Expressed at lower levels in brown adipose tissue.

The protein resides in the cell membrane. It is found in the cytoplasm. It localises to the cytosol. Its subcellular location is the perinuclear region. The protein localises to the peroxisome membrane. The protein resides in the mitochondrion membrane. It is found in the nucleus envelope. It localises to the lysosome membrane. Its subcellular location is the endoplasmic reticulum membrane. The catalysed reaction is a 1,2-diacyl-sn-glycero-3-phosphocholine + H2O = a 1-acyl-sn-glycero-3-phosphocholine + a fatty acid + H(+). It carries out the reaction a 1,2-diacyl-sn-glycero-3-phosphocholine + H2O = a 2-acyl-sn-glycero-3-phosphocholine + a fatty acid + H(+). It catalyses the reaction 1,2-dihexadecanoyl-sn-glycero-3-phosphocholine + H2O = 1-hexadecanoyl-sn-glycero-3-phosphocholine + hexadecanoate + H(+). The enzyme catalyses 1,2-dihexadecanoyl-sn-glycero-3-phosphocholine + H2O = 2-hexadecanoyl-sn-glycero-3-phosphocholine + hexadecanoate + H(+). The catalysed reaction is 1-hexadecanoyl-2-(9Z-octadecenoyl)-sn-glycero-3-phosphocholine + H2O = 2-(9Z-octadecenoyl)-sn-glycero-3-phosphocholine + hexadecanoate + H(+). It carries out the reaction 1-hexadecanoyl-2-(9Z-octadecenoyl)-sn-glycero-3-phosphocholine + H2O = 1-hexadecanoyl-sn-glycero-3-phosphocholine + (9Z)-octadecenoate + H(+). It catalyses the reaction 1-hexadecanoyl-2-(5Z,8Z,11Z,14Z-eicosatetraenoyl)-sn-glycero-3-phosphocholine + H2O = 1-hexadecanoyl-sn-glycero-3-phosphocholine + (5Z,8Z,11Z,14Z)-eicosatetraenoate + H(+). The enzyme catalyses 1-hexadecanoyl-2-(5Z,8Z,11Z,14Z-eicosatetraenoyl)-sn-glycero-3-phosphocholine + H2O = 2-(5Z,8Z,11Z,14Z)-eicosatetraenoyl-sn-glycero-3-phosphocholine + hexadecanoate + H(+). The catalysed reaction is 1-hexadecanoyl-2-(9Z,12Z-octadecadienoyl)-sn-glycero-3-phosphoethanolamine + H2O = 1-hexadecanoyl-sn-glycero-3-phosphoethanolamine + (9Z,12Z)-octadecadienoate + H(+). It carries out the reaction 1-hexadecanoyl-2-(9Z,12Z-octadecadienoyl)-sn-glycero-3-phosphoethanolamine + H2O = 2-(9Z,12Z)-octadecadienoyl-sn-glycero-3-phosphoethanolamine + hexadecanoate + H(+). It catalyses the reaction 1-hexadecanoyl-2-(5Z,8Z,11Z,14Z-eicosatetraenoyl)-sn-glycero-3-phosphoethanolamine + H2O = 1-hexadecanoyl-sn-glycero-3-phosphoethanolamine + (5Z,8Z,11Z,14Z)-eicosatetraenoate + H(+). The enzyme catalyses 1-hexadecanoyl-2-(5Z,8Z,11Z,14Z-eicosatetraenoyl)-sn-glycero-3-phosphoethanolamine + H2O = 2-(5Z,8Z,11Z,14Z)-eicosatetraenoyl-sn-glycero-3-phosphoethanolamine + hexadecanoate + H(+). The catalysed reaction is 1-hexanoyl-2-acyl-sn-glycero-3-phosphocholine + H2O = hexanoate + a 2-acyl-sn-glycero-3-phosphocholine + H(+). It carries out the reaction 1-hexanoyl-2-acyl-sn-glycero-3-phosphocholine + H2O = 1-hexanoyl-sn-glycero-3-phosphocholine + a fatty acid + H(+). It catalyses the reaction 1,2-diheptadecanoyl-sn-glycero-3-phosphoethanolamine + 1-(9Z-octadecenoyl)-2-hexadecanoyl-sn-glycero-3-phosphocholine = 1,2-diheptadecanoyl-sn-glycero-3-phospho-N-hexadecanoyl-ethanolamine + 1-(9Z-octadecenoyl)-sn-glycero-3-phosphocholine + H(+). The enzyme catalyses 1,2-diheptadecanoyl-sn-glycero-3-phosphoethanolamine + 1-(9Z-octadecenoyl)-2-hexadecanoyl-sn-glycero-3-phosphocholine = 1,2-diheptadecanoyl-sn-glycero-3-phospho-N-(9Z-octadecenoyl)-ethanolamine + 2-hexadecanoyl-sn-glycero-3-phosphocholine + H(+). The catalysed reaction is 1,2-dihexanoyl-sn-glycero-3-phosphoethanolamine + 2-heptanoyl-sn-glycero-3-phosphocholine = hexanoyl-sn-glycero-3-phosphoethanolamine + 1-hexanoyl-2-heptanoyl-sn-glycero-3-phosphocholine. It carries out the reaction 1-hexadecanoyl-2-octadecanoyl-sn-glycero-3-phosphocholine + H2O = octadecanoate + 1-hexadecanoyl-sn-glycero-3-phosphocholine + H(+). It catalyses the reaction 1-hexadecanoyl-2-octadecanoyl-sn-glycero-3-phosphocholine + H2O = 2-octadecanoyl-sn-glycero-3-phosphocholine + hexadecanoate + H(+). The enzyme catalyses 1-octadecanoyl-2-hexadecanoyl-sn-glycero-3-phosphocholine + H2O = 1-octadecanoyl-sn-glycero-3-phosphocholine + hexadecanoate + H(+). The catalysed reaction is 1-octadecanoyl-2-hexadecanoyl-sn-glycero-3-phosphocholine + H2O = 2-hexadecanoyl-sn-glycero-3-phosphocholine + octadecanoate + H(+). It carries out the reaction 1-hexadecanoyl-2-(9Z,12Z-octadecadienoyl)-sn-glycero-3-phosphocholine + H2O = (9Z,12Z)-octadecadienoate + 1-hexadecanoyl-sn-glycero-3-phosphocholine + H(+). It catalyses the reaction 1-hexadecanoyl-2-(9Z,12Z-octadecadienoyl)-sn-glycero-3-phosphocholine + H2O = 2-(9Z,12Z-octadecadienoyl)-sn-glycero-3-phosphocholine + hexadecanoate + H(+). The enzyme catalyses 1,2-di-(9Z-octadecenoyl)-sn-glycero-3-phosphocholine + H2O = 2-(9Z-octadecenoyl)-sn-glycero-3-phosphocholine + (9Z)-octadecenoate + H(+). The catalysed reaction is 1,2-dihexadecanoyl-sn-glycero-3-phosphocholine + H2O = hexadecanoyl-sn-glycero-3-phosphocholine + hexadecanoate + H(+). It carries out the reaction 1,2-di-(9Z-octadecenoyl)-sn-glycero-3-phosphocholine + H2O = 1-(9Z-octadecenoyl)-sn-glycero-3-phosphocholine + (9Z)-octadecenoate + H(+). It catalyses the reaction 1,2-di-(9Z-octadecenoyl)-sn-glycero-3-phosphoethanolamine + 1,2-dihexadecanoyl-sn-glycero-3-phosphocholine = hexadecanoyl-sn-glycero-3-phosphocholine + N-hexadecanoyl-1,2-di-(9Z-octadecenoyl)-sn-glycero-3-phosphoethanolamine + H(+). The enzyme catalyses 1,2-di-(9Z,12Z-octadecadienoyl)-sn-glycero-3-phosphocholine + H2O = 1-(9Z,12Z)-octadecadienoyl-sn-glycero-3-phosphocholine + (9Z,12Z)-octadecadienoate + H(+). Its function is as follows. Exhibits both phospholipase A1/2 and acyltransferase activities. Shows phospholipase A1 (PLA1) and A2 (PLA2), catalyzing the calcium-independent release of fatty acids from the sn-1 or sn-2 position of glycerophospholipids. For most substrates, PLA1 activity is much higher than PLA2 activity. Shows O-acyltransferase activity, catalyzing the transfer of a fatty acyl group from glycerophospholipid to the hydroxyl group of lysophospholipid. Shows N-acyltransferase activity,catalyzing the calcium-independent transfer of a fatty acyl group at the sn-1 position of phosphatidylcholine (PC) and other glycerophospholipids to the primary amine of phosphatidylethanolamine (PE), forming N-acylphosphatidylethanolamine (NAPE), which serves as precursor for N-acylethanolamines (NAEs). Exhibits high N-acyltransferase activity and low phospholipase A1/2 activity. Required for complete organelle rupture and degradation that occur during eye lens terminal differentiation, when fiber cells that compose the lens degrade all membrane-bound organelles in order to provide lens with transparency to allow the passage of light. Organelle membrane degradation is probably catalyzed by the phospholipase activity. In terms of biological role, (Microbial infection) Acts as a host factor for picornaviruses: required during early infection to promote viral genome release into the cytoplasm. This is Phospholipase A and acyltransferase 3 from Mus musculus (Mouse).